The primary structure comprises 203 residues: Cbp/p300-interacting transactivator 1 (203 aa).

Disordered regions lie at residues 1 to 24 and 51 to 86; these read MPTMSRPALDVKGGTTSGKEDANQ and TANGAKANGVPTSSSGSTSPIGSPTATPSSKPPSFN. A compositionally biased stretch (low complexity) spans 61–84; sequence PTSSSGSTSPIGSPTATPSSKPPS. The Nuclear export signal motif lies at 168-177; the sequence is LMSLVVELGL.

The protein belongs to the CITED family. Homodimer. Binds to RBM14. Interacts (via N-terminus) with HSPA8; the interaction suppresses the association of CITED1 with p300/CBP and SMAD-mediated transcription transactivation. Interacts (via C-terminus) with TOX3 (via HGM box); the interaction increases estrogen-response element (ERE)-dependent transcription and protection against cell death. Interacts with ESR1; the interaction occurs in a estrogen-dependent manner. Interacts (unphosphorylated form preferentially and via C-terminus) with EP300. Interacts (via C-terminus) with CREBBP. Interacts with EGR2. Phosphorylated. Phosphorylation changes in a cell cycle-dependent manner and reduces its transcriptional cofactor activity. In terms of tissue distribution, expressed in calvarial osteoblasts. Expressed in nulliparous mammary epithelial cells; absent in pregnant mice and in lacting mammary glands. Also expressed in mammary tumors (at protein level). Expressed only in melanocytes and testis. Expressed at high levels in the strongly pigmented melanoma cells but at low levels in the weakly pigmented cells.

Its subcellular location is the nucleus. The protein resides in the cytoplasm. Transcriptional coactivator of the p300/CBP-mediated transcription complex. Enhances SMAD-mediated transcription by strengthening the functional link between the DNA-binding SMAD transcription factors and the p300/CBP transcription coactivator complex. Stimulates estrogen-dependent transactivation activity mediated by estrogen receptors signaling; stabilizes the interaction of estrogen receptor ESR1 and histone acetyltransferase EP300. Positively regulates TGF-beta signaling through its association with the SMAD/p300/CBP-mediated transcriptional coactivator complex. Induces transcription from estrogen-responsive promoters and protection against cell death. Potentiates EGR2-mediated transcriptional activation activity from the ERBB2 promoter. Acts as an inhibitor of osteoblastic mineralization through a cAMP-dependent parathyroid hormone receptor signaling. May play a role in pigmentation of melanocytes. Associates with chromatin to the estrogen-responsive TGF-alpha promoter region in a estrogen-dependent manner. The sequence is that of Cbp/p300-interacting transactivator 1 (Cited1) from Mus musculus (Mouse).